Here is an 86-residue protein sequence, read N- to C-terminus: Small ribosomal subunit protein bS18 (86 aa).

It belongs to the bacterial ribosomal protein bS18 family. As to quaternary structure, part of the 30S ribosomal subunit. Forms a tight heterodimer with protein bS6.

Its function is as follows. Binds as a heterodimer with protein bS6 to the central domain of the 16S rRNA, where it helps stabilize the platform of the 30S subunit. This chain is Small ribosomal subunit protein bS18, found in Protochlamydia amoebophila (strain UWE25).